Here is a 438-residue protein sequence, read N- to C-terminus: Proline--tRNA ligase (438 aa).

This sequence belongs to the class-II aminoacyl-tRNA synthetase family. ProS type 2 subfamily. In terms of assembly, homodimer.

It localises to the cytoplasm. The catalysed reaction is tRNA(Pro) + L-proline + ATP = L-prolyl-tRNA(Pro) + AMP + diphosphate. Functionally, catalyzes the attachment of proline to tRNA(Pro) in a two-step reaction: proline is first activated by ATP to form Pro-AMP and then transferred to the acceptor end of tRNA(Pro). The chain is Proline--tRNA ligase from Rickettsia canadensis (strain McKiel).